The sequence spans 123 residues: Ribosome-binding factor A (123 aa).

Belongs to the RbfA family. In terms of assembly, monomer. Binds 30S ribosomal subunits, but not 50S ribosomal subunits or 70S ribosomes.

It is found in the cytoplasm. One of several proteins that assist in the late maturation steps of the functional core of the 30S ribosomal subunit. Associates with free 30S ribosomal subunits (but not with 30S subunits that are part of 70S ribosomes or polysomes). Required for efficient processing of 16S rRNA. May interact with the 5'-terminal helix region of 16S rRNA. In Neisseria meningitidis serogroup A / serotype 4A (strain DSM 15465 / Z2491), this protein is Ribosome-binding factor A.